We begin with the raw amino-acid sequence, 1578 residues long: MDDEDGRCLLDVICDPQALNDFLHGSEKLDSDDLLDAPVEAQSAFYEGPGLHVQEAAANHLNPEPSQPAPSVDLDFLEDDILGSPAAGGGGGGGGAPDQPCDILQQSLQEANITEQTLEAEAELDLGPFQLPTLQPADNGAGATGAAGATAVTAGPQALFPGSADLLGLQAPPTVLTHQALVPPQDVVNKALSVQPFLQPVGLGNVTLQPISGLQGLPNGSPGNAAAATLGLTPIQVVGQPVMALNPPTSQLLAKQVPVSGYLASAAGPSEPVTLASAGVSPQGAGLVIQKNLPAAVTTTLNGNSVFAGTGAATAAASGAPSGQPLAVAPGLGTSPLVQAPSVILHRTPTPIQPKPTGVLPSKLYQLTPKPFPPTGATLTIQGEPGTLPQQPKAPQNLTFMATGKAGQNVVLSGFPAPALQANVFKQPPVTTTGTAPPQPPGALSKPMSVHLLNQGSSIVIPAQHMLPGQNQFLLPGTPAVQLPQSLSALPANVGGQILTAAAPHAGGQLIANPILTNQNLAGPLSLGPVLAPHSGAHSAAHILSAAPIQVGQPALFQMPVSLATGSLPTQSQPAPTGPTATTVLQGVTLPPSAVAMLNTPDGLVQPSTPAATTGEATPVLAVQPATQVPPAVTTPLPMGLQQPQAQQPPQVPTPQAATQPQATPPQASPSLASSPEKIVLGQAPPAATTAILTQDSLQMFLPQERSQQPLSTEGPHLSVPASVIVSAPPPAQDPALATPVTKGAGLGAQTPDSRASPAPAPQIPAAAPLKAPGPASSPSLPHQAPLGDSPHMPSPHPARPPSRPPSRPHSRPPSQPQSLTCPPSEPTLHPCPPPQGPPTLPGIFVIQNQLGAPPPASTPASTAPGPPQPPLRPPSQPPEGPLPPASHLPPASTPSAVASSSEPSARLPVPTPPDFQLQFPPSQGPHKSPTPPPALHMVPEPTAPPPPPPRTFQMVTAPFPALPQPKALLERFHQVPSGIILQNKAGGTPTTPQTSTTLGTLTGPTASVLVSGQAPPGTPAASSHVPASTPMATTGLPPLLPAENKAFASNLPTLSVAKATVSGPGKPPAIQYDSKLCSLKKQPLLQPSKEACFLEHLHKHQGSVLHPDYKTAFPSFEDALHRLLPYHVYQGALPSPNDYHKVDEEFETVSTQLLKRTQAMLNKYRLLLLEESRRVSPSAEMVMIDRMFIQEEKTTLALDKQLAKEKPDEYVSSSRSLGFPVPVSSEGHRLPSHGQSSSSSTSGTSAQPPPHLPTKLVIRHGGAGGSPSVTWARASSSLSSTSSSSSSSSAASSLDADEDGPMPTRNRPPIKTYEARSRIGLKLKIKQEAGLSKVVHNTALDPVHQPLPAPTPAKGAEPPPHPAPPPLPPATQAQMNGTLDHPPPAVRKPTVPASCPRLPLRKTYRENMGNPGAAEGAQGRPRGAGSPTPLPTKVDEATSGLIRELAAVEDELYQRVLKGGPPPPETPASATSQGPTEPSWEAPVLPPAKRRKSESPDVDQASFSSDSPQDDTLTEHLQSAIDSILNLQQAPGRTPAGPYPHTGPTPGTPTSPAPLHRPDAFPPSSHNGGLGARTLNR.

Disordered regions lie at residues 80–101, 631–673, and 725–951; these read DILG…DQPC, PAVT…PSLA, and IVSA…PPPR. Positions 86-96 are enriched in gly residues; the sequence is AAGGGGGGGGA. Composition is skewed to low complexity over residues 631–662 and 764–782; these read PAVT…TQPQ and IPAA…PSLP. Pro residues-rich tracts occupy residues 793–816, 824–841, and 865–888; these read MPSP…PPSQ, PSEP…PPTL, and PGPP…PASH. Residues 889 to 906 show a composition bias toward low complexity; it reads LPPASTPSAVASSSEPSA. S929 is modified (phosphoserine). T931 carries the post-translational modification Phosphothreonine. Residues 942 to 951 are compositionally biased toward pro residues; sequence PTAPPPPPPR. At K1067 the chain carries N6-acetyllysine. Positions 1206–1316 are disordered; sequence EKPDEYVSSS…NRPPIKTYEA (111 aa). 2 stretches are compositionally biased toward low complexity: residues 1233 to 1247 and 1275 to 1294; these read SHGQ…GTSA and ASSS…AASS. K1327 participates in a covalent cross-link: Glycyl lysine isopeptide (Lys-Gly) (interchain with G-Cter in SUMO2). 2 disordered regions span residues 1342 to 1435 and 1457 to 1578; these read DPVH…PTKV and VLKG…TLNR. The span at 1346–1370 shows a compositional bias: pro residues; it reads QPLPAPTPAKGAEPPPHPAPPPLPP. S1427 is modified (phosphoserine). The segment covering 1502-1532 has biased composition (polar residues); the sequence is ASFSSDSPQDDTLTEHLQSAIDSILNLQQAP. A compositionally biased stretch (pro residues) spans 1538–1553; sequence GPYPHTGPTPGTPTSP.

In terms of assembly, component of the multiprotein chromatin-remodeling complexes SWI/SNF: SWI/SNF-A (BAF), SWI/SNF-B (PBAF) and related complexes. The canonical complex contains a catalytic subunit (either SMARCA4/BRG1/BAF190A or SMARCA2/BRM/BAF190B) and at least SMARCE1, ACTL6A/BAF53, SMARCC1/BAF155, SMARCC2/BAF170, and SMARCB1/SNF5/BAF47. Other subunits specific to each of the complexes may also be present permitting several possible combinations developmentally and tissue specific. Component of the SWI/SNF (GBAF) subcomplex, which includes at least BICRA or BICRAL (mutually exclusive), BRD9, SS18, the core BAF subunits, SMARCA2/BRM, SMARCA4/BRG1/BAF190A, ACTL6A/BAF53, SMARCC1/BAF155, and SMARCD1/BAF60A. Interacts with BRD4; the interaction bridges BRD4 to the GBAF complex.

Its subcellular location is the nucleus. Functionally, component of SWI/SNF chromatin remodeling subcomplex GBAF that carries out key enzymatic activities, changing chromatin structure by altering DNA-histone contacts within a nucleosome in an ATP-dependent manner. May play a role in BRD4-mediated gene transcription. The sequence is that of BRD4-interacting chromatin-remodeling complex-associated protein from Mus musculus (Mouse).